We begin with the raw amino-acid sequence, 491 residues long: NADPH:adrenodoxin oxidoreductase, mitochondrial (491 aa).

The N-terminal 32 residues, 1 to 32 (MASRCWRWWGWSAWPRTRLPPAGSTPSFCHHF), are a transit peptide targeting the mitochondrion. FAD-binding residues include A49, E69, L77, and V113. Residues 184 to 187 (QGNV), 228 to 229 (RR), and E240 each bind NADP(+). A phosphoserine mark is found at S310 and S317. FAD is bound by residues W398 and 405–407 (GVI). G405 serves as a coordination point for NADP(+).

Belongs to the ferredoxin--NADP reductase type 1 family. In terms of assembly, monomer. Interacts directly with FDX1. Requires FAD as cofactor.

Its subcellular location is the mitochondrion. The protein localises to the mitochondrion inner membrane. It catalyses the reaction 2 reduced [adrenodoxin] + NADP(+) + H(+) = 2 oxidized [adrenodoxin] + NADPH. The enzyme catalyses 2 reduced [2Fe-2S]-[ferredoxin] + NADP(+) + H(+) = 2 oxidized [2Fe-2S]-[ferredoxin] + NADPH. It functions in the pathway steroid metabolism; cholesterol metabolism. Its function is as follows. Serves as the first electron transfer protein in all the mitochondrial P450 systems including cholesterol side chain cleavage in all steroidogenic tissues, steroid 11-beta hydroxylation in the adrenal cortex, 25-OH-vitamin D3-24 hydroxylation in the kidney, and sterol C-27 hydroxylation in the liver. Also acts as a ferredoxin--NADP(+) reductase essential for coenzyme Q biosynthesis: together with FDX2, transfers the electrons required for the hydroxylation reaction performed by COQ6. The polypeptide is NADPH:adrenodoxin oxidoreductase, mitochondrial (Homo sapiens (Human)).